Here is a 1156-residue protein sequence, read N- to C-terminus: MDQRLGYKFLVPDPKAGVFYRPLHFQYVSYSNFILHRLHEILTVKRPLLSFKNNTERIMIEISNVKVTPPDYSPIIASIKGKSYDALATFTVNIFKEVMTKEGISITKISSYEGKDSHLIKIPLLIGYGNKNPLDTAKYLVPNVIGGVFINKQSVEKVGINLVEKITTWPKFRVVKPNSFTFSFSSVSPPNVLPTRYRHYKISLDISQLEALNISSTKTFITVNIVLLSQYLSRVSLEFIRRSLSYDMPPEVVYLVNAIIDSAKRITESITDFNIDTYINDLVEAEHIKQKSQLTINEFKYEMLHNFLPHMNYTPDQLKGFYMISLLRKFLYCIYHTSRYPDRDSMVCHRILTYGKYFETLAHDELENYIGNIRNDIMNNHKNRGTYAVNIHVLTTPGLNHAFSSLLSGKFKKSDGSYRTHPHYSWMQNISIPRSVGFYPDQVKISKMFSVRKYHPSQYLYFCSSDVPERGPQVGLVSQLSVLSSITNILTSEYLDLEKKICEYIRSYYKDDISYFETGFPITIENALVASLNPNMICDFVTDFRRRKRMGFFGNLEVGITLVRDHMNEIRINIGAGRLVRPFLVVDNGELMMDVCPELESRLDDMTFSDIQKEFPHVIEMVDIEQFTFSNVCESVQKFRMMSKDERKQYDLCDFPAEFRDGYVASSLVGINHNSGPRAILGCAQAKQAISCLSSDIRNKIDNGIHLMYPERPIVISKALETSKIAANCFGQHVTIALMSYKGINQEDGIIIKKQFIQRGGLDIVTAKKHQVEIPLENFNNKERDRSNAYSKLESNGLVRLNAFLESGDAIARNISSRTLEDDFARDNQISFDVSEKYTDMYKSRVERVQVELTDKVKVRVLTMKERRPILGDKFTTRTSQKGTVAYIADETELPYDENGITPDVIINSTSIFSRKTISMLIEVILTAAYSAKPYNNKGENRPVCFPSSNETSIDTYMQFAKQCYEHSNPKLSDEELSDKIFCEKILYDPETDKPYASKVFFGPIYYLRLRHLTQDKATVRCRGKKTKLIRQANEGRKRGGGIKFGEMERDCLIAHGAANTITEVLKDSEEDYQDVYVCENCGDIAAQIKGINTCLRCSKLNLSPLLTKIDTTHVSKVFLTQMNARGVKVKLDFERRPPSFYKPLDKVDLKPSFLV.

This sequence belongs to the RNA polymerase beta chain family. As to quaternary structure, the DNA-dependent RNA polymerase used for intermediate and late genes expression consists of eight subunits 147 kDa, 133 kDa, 35 kDa, 30 kDa, 22 kDa, 19 kDa, 18 kDa and 7 kDa totalling more than 500 kDa in mass. The same holoenzyme, with the addition of the transcription-specificity factor RAP94, is used for early gene expression.

The protein resides in the virion. The catalysed reaction is RNA(n) + a ribonucleoside 5'-triphosphate = RNA(n+1) + diphosphate. Its function is as follows. Part of the DNA-dependent RNA polymerase which catalyzes the transcription of viral DNA into RNA using the four ribonucleoside triphosphates as substrates. Responsible for the transcription of early, intermediate and late genes. DNA-dependent RNA polymerase associates with the early transcription factor (ETF), itself composed of D6 and A7, thereby allowing the early genes transcription. Late transcription, and probably also intermediate transcription, require newly synthesized RNA polymerase. In Homo sapiens (Human), this protein is DNA-directed RNA polymerase 133 kDa polypeptide (RPO132).